The chain runs to 346 residues: Probable long-chain-alcohol O-fatty-acyltransferase 6 (346 aa).

8 helical membrane-spanning segments follow: residues 7–27 (LFIQVWVSAIISVTYCYYLTP), 36–56 (LLSVLPVCVLFLIIPIFFSTV), 59–79 (SFTIAFFLSGLAVPKLILFAL), 116–136 (FPKWVFALKVFIFGALLLQAY), 146–166 (FLLGLYALHIYLELEISLTLI), 228–248 (FFAIFATFLVSGVAHEILYFY), 255–275 (TWEVTWFFVLHGFCMAAEVAL), and 289–309 (PAVSRLLTVGFVFVTGVWLFS).

It belongs to the wax synthase family.

The protein localises to the membrane. The catalysed reaction is a long chain fatty alcohol + a fatty acyl-CoA = a wax ester + CoA. Catalyzes the final step in the synthesis of long-chain linear esters (waxes). This is Probable long-chain-alcohol O-fatty-acyltransferase 6 (AT6) from Arabidopsis thaliana (Mouse-ear cress).